A 421-amino-acid polypeptide reads, in one-letter code: Testin (421 aa).

The region spanning 92 to 199 (MILTNPVAAK…GDVKLPYEMG (108 aa)) is the PET domain. Residues 133–164 (EKQPVAGSEGAQYRKKQLAKQLPAHDQDPSKC) are disordered. The segment covering 155 to 164 (PAHDQDPSKC) has biased composition (basic and acidic residues). 3 consecutive LIM zinc-binding domains span residues 234 to 297 (YFCY…CDSE), 299 to 359 (PRCA…NHAV), and 362 to 421 (QGCH…KMMS).

Belongs to the prickle / espinas / testin family. As to quaternary structure, interacts via LIM domain 1 with ZYX. Interacts (via LIM domain 3) with ENAH and VASP. Interacts with ALKBH4, talin, actin, alpha-actinin, GRIP1 and PXN. Interacts (via LIM domain 2) with ACTL7A (via N-terminus). Heterodimer with ACTL7A; the heterodimer interacts with ENAH to form a heterotrimer.

The protein localises to the cytoplasm. The protein resides in the cell junction. It is found in the focal adhesion. Its function is as follows. Scaffold protein that may play a role in cell adhesion, cell spreading and in the reorganization of the actin cytoskeleton. Plays a role in the regulation of cell proliferation. May act as a tumor suppressor. The chain is Testin (TES) from Oryctolagus cuniculus (Rabbit).